The chain runs to 699 residues: SPS-sensor serine protease component SSY5 (699 aa).

Disordered stretches follow at residues 1–113 (MVRF…LQGF) and 129–158 (VKEE…GNAR). The propeptide occupies 1-381 (MVRFFGLNKK…YCVKDYIKKA (381 aa)). The span at 24–38 (NEQNAAETSSSNVSG) shows a compositional bias: polar residues. The span at 39–51 (NEERIDPNSHDAN) shows a compositional bias: basic and acidic residues. The span at 52-78 (PENANNDDASTTFGSSIQSSSIFSRGR) shows a compositional bias: low complexity. Residues 83–93 (TGASSSMATSE) are compositionally biased toward polar residues. Low complexity-rich tracts occupy residues 97 to 109 (HSSG…NSKN) and 144 to 154 (SSSTSSTLATS). The serine protease stretch occupies residues 459 to 699 (FAITCAHVVL…QWDIDPQLDG (241 aa)). Active-site charge relay system residues include H465, D545, and S640.

Belongs to the peptidase S64 family. In terms of assembly, component of the plasma membrane SPS (SSY1-PTR3-SSY5) amino acid sensor complex. The propeptide is autoproteolytically cleaved from the catalytic domain but remains associated, forming an inactive protease complex. This processing occurs even in the absence of signaling.

It is found in the cell membrane. Its function is as follows. Protease component of the SPS-sensor system, which regulates the expression of several amino acid-metabolizing enzymes and amino acid- and peptide-permeases in response to extracellular amino acid levels by controlling the activity of two transcription factors, STP1 and STP2. Catalyzes the activation of these transcription factors, which are synthesized as latent cytoplasmic precursors, by proteolytic removal of an N-terminal inhibitory domain containing cytoplasmic retention motifs. SSY5 binds as an inactive protease complex to STP1. In response to extracellular amino acids and dependent on the other SPS-sensor components, the inhibitory propeptide is induced to dissociate, and thereby enables the catalytic domain to process STP1. This is SPS-sensor serine protease component SSY5 (SSY5) from Saccharomyces cerevisiae (strain YJM789) (Baker's yeast).